The chain runs to 137 residues: Urease subunit beta (137 aa).

The disordered stretch occupies residues 113–137 (NGHPNAGVKNDEGKQNANKESGDNR).

Belongs to the urease beta subunit family. In terms of assembly, heterotrimer of UreA (gamma), UreB (beta) and UreC (alpha) subunits. Three heterotrimers associate to form the active enzyme.

The protein localises to the cytoplasm. The catalysed reaction is urea + 2 H2O + H(+) = hydrogencarbonate + 2 NH4(+). The protein operates within nitrogen metabolism; urea degradation; CO(2) and NH(3) from urea (urease route): step 1/1. The polypeptide is Urease subunit beta (Staphylococcus carnosus (strain TM300)).